The following is a 156-amino-acid chain: Small ribosomal subunit protein uS7 (156 aa).

Belongs to the universal ribosomal protein uS7 family. As to quaternary structure, part of the 30S ribosomal subunit. Contacts proteins S9 and S11.

In terms of biological role, one of the primary rRNA binding proteins, it binds directly to 16S rRNA where it nucleates assembly of the head domain of the 30S subunit. Is located at the subunit interface close to the decoding center, probably blocks exit of the E-site tRNA. This chain is Small ribosomal subunit protein uS7, found in Rippkaea orientalis (strain PCC 8801 / RF-1) (Cyanothece sp. (strain PCC 8801)).